The following is a 507-amino-acid chain: 25-hydroxyvitamin D-1 alpha hydroxylase, mitochondrial (507 aa).

Residue Cys454 coordinates heme.

It belongs to the cytochrome P450 family. Requires heme as cofactor. Kidney.

The protein localises to the mitochondrion membrane. The enzyme catalyses calcidiol + 2 reduced [adrenodoxin] + O2 + 2 H(+) = calcitriol + 2 oxidized [adrenodoxin] + H2O. It carries out the reaction secalciferol + 2 reduced [adrenodoxin] + O2 + 2 H(+) = calcitetrol + 2 oxidized [adrenodoxin] + H2O. It catalyses the reaction 25-hydroxy-24-oxocalciol + 2 reduced [adrenodoxin] + O2 + 2 H(+) = (1S)-1,25-dihydroxy-24-oxocalciol + 2 oxidized [adrenodoxin] + H2O. The catalysed reaction is 25-hydroxyvitamin D2 + 2 reduced [adrenodoxin] + O2 + 2 H(+) = 1alpha,25-dihydroxyvitamin D2 + 2 oxidized [adrenodoxin] + H2O. The protein operates within hormone biosynthesis; vitamin D biosynthesis. Activated by cardiolipin and dioleoyl phosphatidylethanolamine (DOPE), phospholipids found in the inner mitochondrial membrane. Inhibited by high substrate concentration. In terms of biological role, a cytochrome P450 monooxygenase involved in vitamin D metabolism and in calcium and phosphorus homeostasis. Catalyzes the rate-limiting step in the activation of vitamin D in the kidney, namely the hydroxylation of 25-hydroxyvitamin D3/calcidiol at the C1-alpha position to form the hormonally active form of vitamin D3, 1alpha,25-dihydroxyvitamin D3/calcitriol that acts via the vitamin D receptor (VDR). Has 1-alpha-hydroxylase activity on vitamin D intermediates of the CYP24A1-mediated inactivation pathway. Converts 24R,25-dihydroxyvitamin D3/secalciferol to 1-alpha,24,25-trihydroxyvitamin D3, an active ligand of VDR. Also active on 25-hydroxyvitamin D2. Mechanistically, uses molecular oxygen inserting one oxygen atom into a substrate, and reducing the second into a water molecule, with two electrons provided by NADPH via FDXR/adrenodoxin reductase and FDX1/adrenodoxin. This Mus musculus (Mouse) protein is 25-hydroxyvitamin D-1 alpha hydroxylase, mitochondrial (Cyp27b1).